A 592-amino-acid polypeptide reads, in one-letter code: Putative nucleoside-triphosphatase (592 aa).

Glutamate 200 (proton acceptor) is an active-site residue.

This sequence belongs to the GDA1/CD39 NTPase family.

It catalyses the reaction a ribonucleoside 5'-triphosphate + H2O = a ribonucleoside 5'-diphosphate + phosphate + H(+). In Toxoplasma gondii, this protein is Putative nucleoside-triphosphatase (NTP4).